A 186-amino-acid chain; its full sequence is UPF0301 protein HI_0304 (186 aa).

Belongs to the UPF0301 (AlgH) family.

The sequence is that of UPF0301 protein HI_0304 from Haemophilus influenzae (strain ATCC 51907 / DSM 11121 / KW20 / Rd).